A 377-amino-acid polypeptide reads, in one-letter code: Cyclin-I (377 aa).

The disordered stretch occupies residues 357 to 377 (DLSRQEGHASPCPPLQPVSVM). The segment covering 367-377 (PCPPLQPVSVM) has biased composition (pro residues).

This sequence belongs to the cyclin family. Highest levels in adult heart, brain and skeletal muscle. Lower levels in adult placenta, lung, kidney and pancreas. Also high levels in fetal brain and lower levels in fetal lung, liver and kidney. Also abundant in testis and thyroid.

It localises to the nucleus membrane. In Homo sapiens (Human), this protein is Cyclin-I.